Here is a 60-residue protein sequence, read N- to C-terminus: UPF0434 protein YcaR (60 aa).

Belongs to the UPF0434 family.

This is UPF0434 protein YcaR from Escherichia coli O139:H28 (strain E24377A / ETEC).